Consider the following 808-residue polypeptide: Ribosome biogenesis protein BOP1 homolog (808 aa).

Low complexity-rich tracts occupy residues 1–25 and 33–50; these read MTSP…LTPC and ATSS…SSFD. The segment at 1 to 55 is disordered; the sequence is MTSPKGKPSPKRSAPAPATAALTPCAEERTEGATSSASASASSHISSSFDSPRDD. WD repeat units lie at residues 430–469, 640–680, 682–720, 724–766, and 777–808; these read GHTA…LMKR, KFSE…RRFK, SGGV…KPYK, SHKG…DYNK, and KHQR…AWTE.

Belongs to the WD repeat BOP1/ERB1 family.

It is found in the nucleus. Its subcellular location is the nucleolus. It localises to the nucleoplasm. Functionally, required for maturation of ribosomal RNAs and formation of the large ribosomal subunit. The sequence is that of Ribosome biogenesis protein BOP1 homolog from Leishmania major.